A 243-amino-acid polypeptide reads, in one-letter code: GrpE protein homolog, mitochondrial (243 aa).

The segment at 42–75 is disordered; the sequence is TEASKKEGKEDKAEAQGSQEPETAAETNKEAEGA. Over residues 44-55 the composition is skewed to basic and acidic residues; sequence ASKKEGKEDKAE.

The protein belongs to the GrpE family. As to quaternary structure, component of the PAM complex, at least composed of mtHsp70, MGE1, TIM44, PAM16, PAM17 and PAM18.

The protein localises to the mitochondrion matrix. Its function is as follows. Essential component of the PAM complex, a complex required for the translocation of transit peptide-containing proteins from the inner membrane into the mitochondrial matrix in an ATP-dependent manner. Seems to control the nucleotide-dependent binding of SSC1 to substrate proteins. In Debaryomyces hansenii (strain ATCC 36239 / CBS 767 / BCRC 21394 / JCM 1990 / NBRC 0083 / IGC 2968) (Yeast), this protein is GrpE protein homolog, mitochondrial (mge1).